A 310-amino-acid chain; its full sequence is tRNA-cytidine(32) 2-sulfurtransferase (310 aa).

The short motif at serine 45–serine 50 is the PP-loop motif element. [4Fe-4S] cluster contacts are provided by cysteine 120, cysteine 123, and cysteine 211.

Belongs to the TtcA family. As to quaternary structure, homodimer. It depends on Mg(2+) as a cofactor. Requires [4Fe-4S] cluster as cofactor.

It localises to the cytoplasm. The catalysed reaction is cytidine(32) in tRNA + S-sulfanyl-L-cysteinyl-[cysteine desulfurase] + AH2 + ATP = 2-thiocytidine(32) in tRNA + L-cysteinyl-[cysteine desulfurase] + A + AMP + diphosphate + H(+). It functions in the pathway tRNA modification. Functionally, catalyzes the ATP-dependent 2-thiolation of cytidine in position 32 of tRNA, to form 2-thiocytidine (s(2)C32). The sulfur atoms are provided by the cysteine/cysteine desulfurase (IscS) system. The sequence is that of tRNA-cytidine(32) 2-sulfurtransferase from Shewanella sp. (strain ANA-3).